A 456-amino-acid chain; its full sequence is tRNA-2-methylthio-N(6)-dimethylallyladenosine synthase (456 aa).

The MTTase N-terminal domain occupies 17–135 (KLYLIQSFGC…LPRMIHQVQE (119 aa)). Residues Cys-26, Cys-62, Cys-96, Cys-172, Cys-176, and Cys-179 each coordinate [4Fe-4S] cluster. The Radical SAM core domain occupies 158-387 (RKDKLKAWVT…IELQNLISLE (230 aa)). Residues 390–453 (QREEGRVLEV…PNLLEGEVVP (64 aa)) form the TRAM domain.

This sequence belongs to the methylthiotransferase family. MiaB subfamily. Monomer. It depends on [4Fe-4S] cluster as a cofactor.

The protein resides in the cytoplasm. The enzyme catalyses N(6)-dimethylallyladenosine(37) in tRNA + (sulfur carrier)-SH + AH2 + 2 S-adenosyl-L-methionine = 2-methylsulfanyl-N(6)-dimethylallyladenosine(37) in tRNA + (sulfur carrier)-H + 5'-deoxyadenosine + L-methionine + A + S-adenosyl-L-homocysteine + 2 H(+). Its function is as follows. Catalyzes the methylthiolation of N6-(dimethylallyl)adenosine (i(6)A), leading to the formation of 2-methylthio-N6-(dimethylallyl)adenosine (ms(2)i(6)A) at position 37 in tRNAs that read codons beginning with uridine. The polypeptide is tRNA-2-methylthio-N(6)-dimethylallyladenosine synthase (Desulforamulus reducens (strain ATCC BAA-1160 / DSM 100696 / MI-1) (Desulfotomaculum reducens)).